We begin with the raw amino-acid sequence, 200 residues long: MQVILLERVAKLGQMGDVVDVKSGYARNFLLPQSKALVASDANIAQFEAQKAQLEARNLETKQEAEALAVKLDGQQFVVIRSASDAGALYGSVTPRDAAEAATEAGFSVDKKQIALIAPIKDLGLHTVAVRLHPEVEVSINLNIARSPEEAELQASGKSIQELAAEEEAAAEFEIAELFDDLGGAASDDDDQAPASDETA.

This sequence belongs to the bacterial ribosomal protein bL9 family.

Binds to the 23S rRNA. This is Large ribosomal subunit protein bL9 from Ruegeria pomeroyi (strain ATCC 700808 / DSM 15171 / DSS-3) (Silicibacter pomeroyi).